Here is a 161-residue protein sequence, read N- to C-terminus: MNRVLYPGTFDPITKGHGDLVERASRLFDHVIIAVAASPKKNPLFPLEQRVELAREVTKHLPNVEVIGFSSLLAHFAKEQGANVFLRGLRAVSDFEYEFQLANMNRQLAPDVESLFLTPSERYSFISSTLVREIAALGGDISKFVHPVVADALTERFKKQA.

Residue Thr9 participates in substrate binding. Residues 9 to 10 and His17 contribute to the ATP site; that span reads TF. Substrate contacts are provided by Lys41, Leu73, and Arg87. Residues 88–90, Glu98, and 123–129 contribute to the ATP site; these read GLR and YSFISST.

Belongs to the bacterial CoaD family. Homohexamer. It depends on Mg(2+) as a cofactor.

It is found in the cytoplasm. It carries out the reaction (R)-4'-phosphopantetheine + ATP + H(+) = 3'-dephospho-CoA + diphosphate. It participates in cofactor biosynthesis; coenzyme A biosynthesis; CoA from (R)-pantothenate: step 4/5. Its function is as follows. Reversibly transfers an adenylyl group from ATP to 4'-phosphopantetheine, yielding dephospho-CoA (dPCoA) and pyrophosphate. This is Phosphopantetheine adenylyltransferase from Pseudomonas putida (strain ATCC 47054 / DSM 6125 / CFBP 8728 / NCIMB 11950 / KT2440).